A 486-amino-acid polypeptide reads, in one-letter code: Galactose-1-phosphate uridylyltransferase (486 aa).

The protein belongs to the galactose-1-phosphate uridylyltransferase type 2 family.

The protein localises to the cytoplasm. It carries out the reaction alpha-D-galactose 1-phosphate + UDP-alpha-D-glucose = alpha-D-glucose 1-phosphate + UDP-alpha-D-galactose. The protein operates within carbohydrate metabolism; galactose metabolism. This is Galactose-1-phosphate uridylyltransferase from Lacticaseibacillus paracasei (strain ATCC 334 / BCRC 17002 / CCUG 31169 / CIP 107868 / KCTC 3260 / NRRL B-441) (Lactobacillus paracasei).